A 339-amino-acid polypeptide reads, in one-letter code: Ketol-acid reductoisomerase (NADP(+)) (339 aa).

Residues 1–182 (MRVYYDRDAD…GGGRAGIIET (182 aa)) form the KARI N-terminal Rossmann domain. NADP(+)-binding positions include 24-27 (YGSQ), Arg48, Ser51, Thr53, and 83-86 (DELQ). The active site involves His108. An NADP(+)-binding site is contributed by Gly134. One can recognise a KARI C-terminal knotted domain in the interval 183 to 328 (TFKEECETDL…AKLRGMMPWI (146 aa)). Asp191, Glu195, Glu227, and Glu231 together coordinate Mg(2+). Ser252 serves as a coordination point for substrate.

Belongs to the ketol-acid reductoisomerase family. Mg(2+) serves as cofactor.

It catalyses the reaction (2R)-2,3-dihydroxy-3-methylbutanoate + NADP(+) = (2S)-2-acetolactate + NADPH + H(+). It carries out the reaction (2R,3R)-2,3-dihydroxy-3-methylpentanoate + NADP(+) = (S)-2-ethyl-2-hydroxy-3-oxobutanoate + NADPH + H(+). It functions in the pathway amino-acid biosynthesis; L-isoleucine biosynthesis; L-isoleucine from 2-oxobutanoate: step 2/4. The protein operates within amino-acid biosynthesis; L-valine biosynthesis; L-valine from pyruvate: step 2/4. Functionally, involved in the biosynthesis of branched-chain amino acids (BCAA). Catalyzes an alkyl-migration followed by a ketol-acid reduction of (S)-2-acetolactate (S2AL) to yield (R)-2,3-dihydroxy-isovalerate. In the isomerase reaction, S2AL is rearranged via a Mg-dependent methyl migration to produce 3-hydroxy-3-methyl-2-ketobutyrate (HMKB). In the reductase reaction, this 2-ketoacid undergoes a metal-dependent reduction by NADPH to yield (R)-2,3-dihydroxy-isovalerate. The protein is Ketol-acid reductoisomerase (NADP(+)) of Methylobacterium radiotolerans (strain ATCC 27329 / DSM 1819 / JCM 2831 / NBRC 15690 / NCIMB 10815 / 0-1).